Reading from the N-terminus, the 119-residue chain is MILQQPLERGPQGRAQRDPRAASGASGGLDAREPLRKQFLSEENMATHFSRLSLHNDHPYCSPPRAFPPALPPLRSPCSELLLWRYPGNLIPEALRLLRLGDTPTPHYPASPAGDMMEL.

Positions 1–34 are disordered; that stretch reads MILQQPLERGPQGRAQRDPRAASGASGGLDAREP. Residues 57-60 are interaction with HCFC1; that stretch reads DHPY. The short motif at 91-100 is the Nuclear export signal element; it reads IPEALRLLRL.

As to quaternary structure, interacts with HCFC1.

It is found in the cytoplasm. Its subcellular location is the nucleus. In terms of biological role, regulates HCFC1 activity by modulating its subcellular localization. Overexpression of HCFC1R1 leads to accumulation of HCFC1 in the cytoplasm. HCFC1R1-mediated export may provide the pool of cytoplasmic HCFC1 required for import of virion-derived VP16 into the nucleus. In Bos taurus (Bovine), this protein is Host cell factor C1 regulator 1 (HCFC1R1).